We begin with the raw amino-acid sequence, 235 residues long: Protein C1orf43 homolog (235 aa).

Residues 11–31 (VNVVLVMAYGSLVFVLLFIFV) traverse the membrane as a helical segment.

The protein localises to the membrane. Its subcellular location is the golgi apparatus. It is found in the mitochondrion. In terms of biological role, general regulator of phagocytosis. Required to uptake Gram negative bacterium by macrophages. The protein is Protein C1orf43 homolog of Rattus norvegicus (Rat).